The sequence spans 935 residues: Auxin response factor 6 (935 aa).

Positions 129–231 (FCKTLTASDT…QLLLGIRRAN (103 aa)) form a DNA-binding region, TF-B3. Disordered regions lie at residues 536-624 (QAYL…PLHT) and 645-714 (SAMT…SASD). 2 stretches are compositionally biased toward low complexity: residues 546–565 (QPQS…QQQQ) and 573–582 (SASSAAVVSA). Polar residues-rich tracts occupy residues 583 to 624 (MSQF…PLHT) and 661 to 689 (SSFQ…SNVP). Positions 796 to 880 (NTFVKVYKSG…WCIKILSPQE (85 aa)) constitute a PB1 domain. The segment covering 896-909 (PSSNNVDKLPSNGN) has biased composition (polar residues). The interval 896 to 917 (PSSNNVDKLPSNGNCDDFGNRS) is disordered.

This sequence belongs to the ARF family. As to quaternary structure, homodimers and heterodimers. As to expression, expressed in the whole plant.

It localises to the nucleus. In terms of biological role, auxin response factors (ARFs) are transcriptional factors that bind specifically to the DNA sequence 5'-TGTCTC-3' found in the auxin-responsive promoter elements (AuxREs). Seems to act as transcriptional activator. Formation of heterodimers with Aux/IAA proteins may alter their ability to modulate early auxin response genes expression. Regulates both stamen and gynoecium maturation. Promotes jasmonic acid production. Partially redundant with ARF8. This Arabidopsis thaliana (Mouse-ear cress) protein is Auxin response factor 6 (ARF6).